The chain runs to 151 residues: D-aminoacyl-tRNA deacylase (151 aa).

A Gly-cisPro motif, important for rejection of L-amino acids motif is present at residues 137 to 138 (GP).

This sequence belongs to the DTD family. Homodimer.

The protein localises to the cytoplasm. The enzyme catalyses glycyl-tRNA(Ala) + H2O = tRNA(Ala) + glycine + H(+). It carries out the reaction a D-aminoacyl-tRNA + H2O = a tRNA + a D-alpha-amino acid + H(+). Its function is as follows. An aminoacyl-tRNA editing enzyme that deacylates mischarged D-aminoacyl-tRNAs. Also deacylates mischarged glycyl-tRNA(Ala), protecting cells against glycine mischarging by AlaRS. Acts via tRNA-based rather than protein-based catalysis; rejects L-amino acids rather than detecting D-amino acids in the active site. By recycling D-aminoacyl-tRNA to D-amino acids and free tRNA molecules, this enzyme counteracts the toxicity associated with the formation of D-aminoacyl-tRNA entities in vivo and helps enforce protein L-homochirality. The chain is D-aminoacyl-tRNA deacylase from Azoarcus sp. (strain BH72).